The following is a 396-amino-acid chain: Ribosomal RNA large subunit methyltransferase I (396 aa).

The PUA domain occupies 2-81 (SVRLVLAKGR…ESIDIAFFTR (80 aa)).

This sequence belongs to the methyltransferase superfamily. RlmI family.

The protein localises to the cytoplasm. The catalysed reaction is cytidine(1962) in 23S rRNA + S-adenosyl-L-methionine = 5-methylcytidine(1962) in 23S rRNA + S-adenosyl-L-homocysteine + H(+). In terms of biological role, specifically methylates the cytosine at position 1962 (m5C1962) of 23S rRNA. The protein is Ribosomal RNA large subunit methyltransferase I of Escherichia coli (strain UTI89 / UPEC).